A 135-amino-acid chain; its full sequence is Ribosome-binding factor A (135 aa).

This sequence belongs to the RbfA family. As to quaternary structure, monomer. Binds 30S ribosomal subunits, but not 50S ribosomal subunits or 70S ribosomes.

It localises to the cytoplasm. One of several proteins that assist in the late maturation steps of the functional core of the 30S ribosomal subunit. Associates with free 30S ribosomal subunits (but not with 30S subunits that are part of 70S ribosomes or polysomes). Required for efficient processing of 16S rRNA. May interact with the 5'-terminal helix region of 16S rRNA. This is Ribosome-binding factor A from Sinorhizobium fredii (strain NBRC 101917 / NGR234).